We begin with the raw amino-acid sequence, 161 residues long: Ribosome maturation factor RimP (161 aa).

The protein belongs to the RimP family.

It localises to the cytoplasm. In terms of biological role, required for maturation of 30S ribosomal subunits. The polypeptide is Ribosome maturation factor RimP (Rickettsia felis (strain ATCC VR-1525 / URRWXCal2) (Rickettsia azadi)).